The sequence spans 255 residues: Pyrroloquinoline-quinone synthase (255 aa).

The protein belongs to the PqqC family.

The catalysed reaction is 6-(2-amino-2-carboxyethyl)-7,8-dioxo-1,2,3,4,7,8-hexahydroquinoline-2,4-dicarboxylate + 3 O2 = pyrroloquinoline quinone + 2 H2O2 + 2 H2O + H(+). The protein operates within cofactor biosynthesis; pyrroloquinoline quinone biosynthesis. Ring cyclization and eight-electron oxidation of 3a-(2-amino-2-carboxyethyl)-4,5-dioxo-4,5,6,7,8,9-hexahydroquinoline-7,9-dicarboxylic-acid to PQQ. This chain is Pyrroloquinoline-quinone synthase, found in Cereibacter sphaeroides (strain ATCC 17023 / DSM 158 / JCM 6121 / CCUG 31486 / LMG 2827 / NBRC 12203 / NCIMB 8253 / ATH 2.4.1.) (Rhodobacter sphaeroides).